Here is a 287-residue protein sequence, read N- to C-terminus: Tetraspanning orphan receptor (287 aa).

The Extracellular segment spans residues 1-27; that stretch reads MSPSLVSDTQKHERGSHGVKIKHFSPY. A helical transmembrane segment spans residues 28–48; it reads IAVCVTTFSLAFCCFMVHGAI. Topologically, residues 49-55 are cytoplasmic; sequence TRQPTHL. Residues 56–76 form a helical membrane-spanning segment; it reads LPFFFIQVFDLIICLIHILGF. Topologically, residues 77–91 are extracellular; it reads MSSTSDIRLVIHTKT. The helical transmembrane segment at 92-114 threads the bilayer; sequence GPIYIKSTGLTFIILSISRMMLA. The Cytoplasmic portion of the chain corresponds to 115–287; it reads FKAYCLGMVW…NASSNAHSSC (173 aa). Residues 165-190 form a disordered region; sequence NNSIGNSGSPNEPNTRPRPDTITYDP.

As to quaternary structure, interacts (via N-terminal extracellular domain) with human C2a.

The protein resides in the cell membrane. Cell surface receptor that binds to human complement C2a protein. This results in inhibition of the classical and lectin pathways of complement activation, probably due to interference with binding of C2a to C4b and interference with cleavage by C1 or MASP2 such that C3 convertase cannot be formed. This infers resistance to complement-mediated cell lysis, allowing parasite survival and infection. This Trypanosoma cruzi protein is Tetraspanning orphan receptor.